The following is a 335-amino-acid chain: Olfactory receptor 52B6 (335 aa).

Topologically, residues 1 to 45 (MAQVRALHKIMALFSANSIGAMNNSDTRIAGCFLTGIPGLEQLHI) are extracellular. Asn-23 carries an N-linked (GlcNAc...) asparagine glycan. A helical transmembrane segment spans residues 46–66 (WLSIPFCIMYITALEGNGILI). The Cytoplasmic segment spans residues 67-74 (CVILSQAI). The helical transmembrane segment at 75–95 (LHEPMYIFLSMLASADVLLST) threads the bilayer. Residues 96–119 (TTMPKALANLWLGYSLISFDGCLT) lie on the Extracellular side of the membrane. Residues Cys-117 and Cys-208 are joined by a disulfide bond. The chain crosses the membrane as a helical span at residues 120-139 (QMFFIHFLFIHSAVLLAMAF). Over 140-158 (DRYVAICSPLRYVTILTSK) the chain is Cytoplasmic. The chain crosses the membrane as a helical span at residues 159 to 179 (VIGKIVTAALSHSFIIMFPSI). At 180 to 215 (FLLEHLHYCQINIIAHTFCEHMGIAHLSCSDISINV) the chain is on the extracellular side. A helical membrane pass occupies residues 216-236 (WYGLAAALLSTGLDIMLITVS). The Cytoplasmic portion of the chain corresponds to 237–256 (YIHILQAVFRLLSQDARSKA). A helical membrane pass occupies residues 257–277 (LSTCGSHICVILLFYVPALFS). Topologically, residues 278 to 293 (VFAYRFGGRSVPCYVH) are extracellular. A helical membrane pass occupies residues 294–314 (ILLASLYVVIPPMLNPVIYGV). Over 315–335 (RTKPILEGAKQMFSNLAKGSK) the chain is Cytoplasmic.

It belongs to the G-protein coupled receptor 1 family.

It localises to the cell membrane. Odorant receptor. This Homo sapiens (Human) protein is Olfactory receptor 52B6 (OR52B6).